The sequence spans 876 residues: AP-1 complex subunit gamma-1 (876 aa).

9 HEAT repeats span residues 97 to 135 (DERQ…ICSA), 136 to 173 (EMAR…KVPD), 248 to 284 (FLHI…KTES), 308 to 345 (SLRV…FDDQ), 346 to 382 (AVQR…ENNV), 384 to 417 (QLTK…KFSP), 418 to 454 (EKLW…NASE), 506 to 545 (VTES…RFPS), and 560 to 599 (SLLL…ATFN). The region spanning 756–873 (PAYAPIVAYE…LEEGQVSNFP (118 aa)) is the GAE domain.

It belongs to the adaptor complexes large subunit family. Adaptor protein complex 1 (AP-1) is a heterotetramer composed of two large adaptins (gamma-type subunit and beta-type subunit), a medium adaptin (mu-type subunit) and a small adaptin (sigma-type subunit). Binds to EPSIN1. Interacts with DRP2A/ADL6 (via C-terminus).

Its subcellular location is the golgi apparatus. The protein localises to the cytoplasmic vesicle. It localises to the clathrin-coated vesicle membrane. In terms of biological role, subunit of clathrin-associated adaptor protein complex 1 that plays a role in protein sorting at the trans-Golgi network and early endosomes (TGN/EE). The AP complexes mediate both the recruitment of clathrin to membranes and the recognition of sorting signals within the cytosolic tails of transmembrane cargo molecules. This Arabidopsis thaliana (Mouse-ear cress) protein is AP-1 complex subunit gamma-1 (GAMMA-ADR).